The following is a 314-amino-acid chain: Probable serine/threonine-protein kinase WNK11 (314 aa).

The interval 1 to 22 (MMTCASSDDNESEKDKDSESFV) is disordered. Residues 31 to 289 (GRYGELLGSG…AAELLCDPFF (259 aa)) form the Protein kinase domain. 111 to 114 (TEIC) contacts ATP. D178 serves as the catalytic Proton acceptor. The segment at 295–314 (DDDEDGENNDNNGAGRIVVS) is disordered.

Belongs to the protein kinase superfamily. Ser/Thr protein kinase family. WNK subfamily.

It carries out the reaction L-seryl-[protein] + ATP = O-phospho-L-seryl-[protein] + ADP + H(+). The enzyme catalyses L-threonyl-[protein] + ATP = O-phospho-L-threonyl-[protein] + ADP + H(+). May regulate flowering time by modulating the photoperiod pathway. The protein is Probable serine/threonine-protein kinase WNK11 (WNK11) of Arabidopsis thaliana (Mouse-ear cress).